The primary structure comprises 421 residues: Alpha-1-antiproteinase 2 (421 aa).

The signal sequence occupies residues 1–24 (MPSSVPWCLLLLAGLCCLVPSSLA). N-linked (GlcNAc...) asparagine glycosylation is found at Asn-73, Asn-110, and Asn-274. The interval 376–395 (GTTMWEIMPISLPPDLKFNR) is RCL.

It belongs to the serpin family. In terms of processing, N-glycosylated with carbohydrates having biantennary side chains. As to expression, plasma.

The protein localises to the secreted. Inhibitor of serine proteases. The protein is Alpha-1-antiproteinase 2 of Equus caballus (Horse).